Here is a 586-residue protein sequence, read N- to C-terminus: MVVGKIIKISGPVVVAEGMKGSQMYEVVKVGNEGLTGEIIQLTENEAIIQVYEETAGIKPGEGVTGTGAPLSVELGPGMLKAMYDGIQRPLNAIEDATNSIYIPRGVNVPSLPRDVKWDFVPSVNVGDEVLAGDIIGTVQETASIVHKILIPVGINGKIKEIKSGSFTVEETVAVVETEKGDKLVTMMQKWPVRKPRPSKVKLPPVIPLLTGQRVEDTFFGLAKGGASAIPGPFGSGKTVTQHQLAKWSDVDVVVYIGCGERGNEMTEVIEEFPHLDDIKTGNKLMDRTVLIANTSNMPVAAREASVYTGITIAEYFRDQGLGVLLTADSTSRWAEAMREISGRLEEMPGEEGYPAYLSSKLAQFYERAGRVDCLGSEDRQGFVCIVGAVSPPGGDFSEPVTSNTLRIVKVFWALDANLARRRHFPAINWLTSYSLYINDIAGWWKKNTGEDWRVLRDEAMGLLQKEAELQEIVQLVGPDALPDRERVILEIARILREDFLQQDAYHEVDSYCSPKKQYNMLKVIMTFYKKALDAVAKGADPAKLSAVSVKGDIARMKYMPEEEFIKTKVPEMIKKMESELGALIK.

232–239 provides a ligand contact to ATP; that stretch reads GPFGSGKT.

This sequence belongs to the ATPase alpha/beta chains family. Has multiple subunits with at least A(3), B(3), C, D, E, F, H, I and proteolipid K(x).

The protein localises to the cell membrane. It carries out the reaction ATP + H2O + 4 H(+)(in) = ADP + phosphate + 5 H(+)(out). Its function is as follows. Component of the A-type ATP synthase that produces ATP from ADP in the presence of a proton gradient across the membrane. The A chain is the catalytic subunit. This Methanococcus vannielii (strain ATCC 35089 / DSM 1224 / JCM 13029 / OCM 148 / SB) protein is A-type ATP synthase subunit A.